We begin with the raw amino-acid sequence, 542 residues long: MSPTELIREIEKRRTFAIISHPDAGKTTLTEKLLLFGGAIQLAGTVKSRKASRHATSDWMELEKQRGISVTSSVMQFPYKDRIINLLDTPGHADFSEDTYRTLTAVDSALMVIDSAKGVEERTIKLMEVCRLRNTPILTFINKLDREGQEPIELLDEIERVLGIRCAPLTWPIGMGKRFKGIFHLSHNRIHLFSPTHGGKIKTGEQIQGLDNPRLSELLGNQVEELQEEIALVQGASHPFDKEAFLAGEQTPVFFGSAMNNFGVEELLDAYVEYAPSPRARETATRRVAPKELKFSGFVFKIQANMDPQHRDRIAFLRVCSGSYQKGMKLRHTRLGREVQIANVLTFMAGEREQAETAWPGDIIGFHNHGTIQIGDTFTQGEELQFTGIPHFAPELFRRVRLKDPLRTKALLKGLQQLSEEGATQLFRPLLGNDLILGAVGVLQFDVVAHRLKHEYSVDCGYDSVQVVTARWVSCNDSRRLEEFRTKAAAHLALDGAGNLTYLAPTRVNLDLTMERWPEVAFHAIREHALGVEDGNPLVASL.

The 269-residue stretch at 11–279 folds into the tr-type G domain; it reads EKRRTFAIIS…AYVEYAPSPR (269 aa). GTP is bound by residues 20 to 27, 88 to 92, and 142 to 145; these read SHPDAGKT, DTPGH, and NKLD.

Belongs to the TRAFAC class translation factor GTPase superfamily. Classic translation factor GTPase family. PrfC subfamily.

It is found in the cytoplasm. Increases the formation of ribosomal termination complexes and stimulates activities of RF-1 and RF-2. It binds guanine nucleotides and has strong preference for UGA stop codons. It may interact directly with the ribosome. The stimulation of RF-1 and RF-2 is significantly reduced by GTP and GDP, but not by GMP. This chain is Peptide chain release factor 3, found in Nitrosococcus oceani (strain ATCC 19707 / BCRC 17464 / JCM 30415 / NCIMB 11848 / C-107).